A 134-amino-acid chain; its full sequence is ATP synthase epsilon chain (134 aa).

The protein belongs to the ATPase epsilon chain family. F-type ATPases have 2 components, CF(1) - the catalytic core - and CF(0) - the membrane proton channel. CF(1) has five subunits: alpha(3), beta(3), gamma(1), delta(1), epsilon(1). CF(0) has three main subunits: a, b and c.

The protein localises to the cell inner membrane. Functionally, produces ATP from ADP in the presence of a proton gradient across the membrane. The protein is ATP synthase epsilon chain of Solibacter usitatus (strain Ellin6076).